Consider the following 403-residue polypeptide: RNA-binding motif, single-stranded-interacting protein 1 (403 aa).

The segment at 30 to 56 (PAHPMAPPSPSTTSSNNNSSSSSNSGW) is disordered. A compositionally biased stretch (low complexity) spans 40–54 (STTSSNNNSSSSSNS). RRM domains are found at residues 62–135 (TNLY…MAKQ) and 141–226 (TNLY…FADG). A Phosphothreonine modification is found at Thr208. Positions 382 to 395 (GQQQVAVETSNDHS) are enriched in polar residues. The interval 382–403 (GQQQVAVETSNDHSPYTFPPNK) is disordered.

As to expression, ubiquitous. Expressed in all tissues except testis.

It is found in the nucleus. In terms of biological role, single-stranded DNA binding protein that interacts with the region upstream of the MYC gene. Binds specifically to the DNA sequence motif 5'-[AT]CT[AT][AT]T-3'. Probably has a role in DNA replication. The sequence is that of RNA-binding motif, single-stranded-interacting protein 1 (Rbms1) from Mus musculus (Mouse).